Reading from the N-terminus, the 1014-residue chain is Regulator of telomere elongation helicase 1 homolog (1014 aa).

The 302-residue stretch at 7–308 (RGVDVDFPYD…NSADKQFDPE (302 aa)) folds into the Helicase ATP-binding domain. 42–49 (SPTGTGKT) contributes to the ATP binding site. The span at 70 to 85 (GGGGGGGGGGGGGGGS) shows a compositional bias: gly residues. The disordered stretch occupies residues 70-106 (GGGGGGGGGGGGGGGSQQPPYGSQPSGSQHSGGSASQ). Positions 86–106 (QQPPYGSQPSGSQHSGGSASQ) are enriched in low complexity. [4Fe-4S] cluster contacts are provided by cysteine 149, cysteine 170, cysteine 175, and cysteine 211. The short motif at 255–258 (DEAH) is the DEAH box element. Residues 906-930 (SSKKSNITHAPGNSGAIHEKSGGQE) form a disordered region.

Belongs to the helicase family. RAD3/XPD subfamily.

It localises to the nucleus. It catalyses the reaction ATP + H2O = ADP + phosphate + H(+). In terms of biological role, a probable ATP-dependent DNA helicase implicated in DNA replication, DNA repair and the maintenance of genomic stability. Acts as an anti-recombinase to counteract toxic recombination and limit crossover during meiosis. Regulates meiotic recombination and crossover homeostasis by physically dissociating strand invasion events and thereby promotes noncrossover repair by meiotic synthesis dependent strand annealing (SDSA) as well as disassembly of D loop recombination intermediates. This chain is Regulator of telomere elongation helicase 1 homolog, found in Oryza sativa subsp. japonica (Rice).